We begin with the raw amino-acid sequence, 530 residues long: MPSNMKQFCKISVWLQQHDPDLLEIINNLCMLGNLSAAKYKHGVTFIYPKQAKIRDEIKKHAYSNDPSQAIKTLESLILPFYIPTPAEFTGEIGSYTGVKLEVEKTEANKVILKNGEAVLVPAADFKPFPDRRLAVWIMESGSMPLEGPPYKRKKEGGGNDPPVPKHISPYTPRTRIAIEVEKAFDDCMRQNWCSVNNPYLAKSVSLLSFLSLNHPTEFIKVLPLIDFDPLVTFYLLLEPYKTHGDDFLIPETILFGPTGWNGTDLYQSAMLEFKKFFTQITRQTFMDIADSATKEVDVPICYSDPETVHSYTNHVRTEILHHNAVNKVTTPNLVVQAYNELEQTNTIRHYGPIFPESTINALRFWKKLWQDEQRFVIHGLHRTLMDQPTYETSEFAEIVRNLRFSRPGNNYINELNITSPAMYGDKHTTGDIAPNDRFAMLVAFINSTDFLYTAIPEEKVGGNETQTSSLTDLVPTRLHSFLNHNLSKLKILNRAQQTVRNILSNDCLNQLKHYVKHTGKNEILKLLQE.

This sequence belongs to the asfivirus polyprotein pp62 family. As to quaternary structure, monomer. Predominantly exists as a monomer, with very little dimers. Homodimerization seems to be linked to low pH. In terms of assembly, homodimer; disulfide-linked. Homotrimer; disulfide-linked. Homohexamer. In terms of processing, monoubiquitinated in vitro by viral UBCv1. Post-translationally, specific enzymatic cleavages in vivo by the viral pS273R protease yield mature proteins.

It is found in the host cytoplasm. Its subcellular location is the host perinuclear region. It localises to the virion. Essential for the correct assembly and maturation of the core of the virion. Its function is as follows. Component of the core shell. Binds to phosphatidylserine, which may enable the core shell binding with the inner membrane. Functionally, component of the core shell. Binds to phosphatidylserine and DNA, which may link the core shell to the inner membrane and to the viral nucleoid. In terms of biological role, component of the core shell. This chain is Polyprotein pp62, found in African swine fever virus (strain Badajoz 1971 Vero-adapted) (Ba71V).